A 333-amino-acid polypeptide reads, in one-letter code: 4-hydroxy-2-oxovalerate aldolase (333 aa).

Positions 3–253 (ILINDSTLRD…NTGIDLYHFL (251 aa)) constitute a Pyruvate carboxyltransferase domain. 11 to 12 (RD) serves as a coordination point for substrate. Asp-12 lines the Mn(2+) pocket. His-15 functions as the Proton acceptor in the catalytic mechanism. Substrate is bound by residues Ser-165 and His-192. Mn(2+) is bound by residues His-192 and His-194.

Belongs to the 4-hydroxy-2-oxovalerate aldolase family. In terms of assembly, interacts with MhpF.

The enzyme catalyses (S)-4-hydroxy-2-oxopentanoate = acetaldehyde + pyruvate. Its pathway is aromatic compound metabolism; 3-phenylpropanoate degradation. Its function is as follows. Catalyzes the retro-aldol cleavage of 4-hydroxy-2-oxopentanoate to pyruvate and acetaldehyde. Is involved in the meta-cleavage pathway for the degradation of aromatic compounds. This Serratia proteamaculans (strain 568) protein is 4-hydroxy-2-oxovalerate aldolase.